A 364-amino-acid chain; its full sequence is Histidinol-phosphate aminotransferase 2 (364 aa).

K223 carries the N6-(pyridoxal phosphate)lysine modification.

This sequence belongs to the class-II pyridoxal-phosphate-dependent aminotransferase family. Histidinol-phosphate aminotransferase subfamily. As to quaternary structure, homodimer. It depends on pyridoxal 5'-phosphate as a cofactor.

The catalysed reaction is L-histidinol phosphate + 2-oxoglutarate = 3-(imidazol-4-yl)-2-oxopropyl phosphate + L-glutamate. The protein operates within amino-acid biosynthesis; L-histidine biosynthesis; L-histidine from 5-phospho-alpha-D-ribose 1-diphosphate: step 7/9. The polypeptide is Histidinol-phosphate aminotransferase 2 (hisC2) (Oceanobacillus iheyensis (strain DSM 14371 / CIP 107618 / JCM 11309 / KCTC 3954 / HTE831)).